The following is a 506-amino-acid chain: Beta-glucosidase 9 (506 aa).

The signal sequence occupies residues 1–22 (MKHFSLLFIFLVILLATSYSDA). Residues Gln-42, His-139, and 184–185 (NE) contribute to the a beta-D-glucoside site. Catalysis depends on Glu-185, which acts as the Proton donor. Cys-204 and Cys-212 are oxidised to a cystine. Asn-211 and Asn-216 each carry an N-linked (GlcNAc...) asparagine glycan. Tyr-328 contacts a beta-D-glucoside. N-linked (GlcNAc...) asparagine glycosylation is present at Asn-363. Glu-396 is a binding site for a beta-D-glucoside. Glu-396 functions as the Nucleophile in the catalytic mechanism. The N-linked (GlcNAc...) asparagine glycan is linked to Asn-429. A beta-D-glucoside-binding residues include Trp-439 and Phe-455. 3 N-linked (GlcNAc...) asparagine glycosylation sites follow: Asn-461, Asn-483, and Asn-499.

Belongs to the glycosyl hydrolase 1 family.

It catalyses the reaction Hydrolysis of terminal, non-reducing beta-D-glucosyl residues with release of beta-D-glucose.. This is Beta-glucosidase 9 from Arabidopsis thaliana (Mouse-ear cress).